We begin with the raw amino-acid sequence, 327 residues long: E3 ubiquitin ligase RNF121 (327 aa).

At Ala2 the chain carries N-acetylalanine. Transmembrane regions (helical) follow at residues 50-70, 79-99, 100-120, 148-168, and 172-192; these read MHAEMVLILIATLVVAQLLLV, SYNMVTLFQMWVVPLYFTVKL, HWWRFLVIWILFSAVTAFVTF, ATGIVGYMAVMFTLFGLNLLF, and PEDAMDFGISLLFYGLYYGVL. The segment at 226-276 adopts an RING-type; atypical zinc-finger fold; sequence CAVCGQQIFVDVSEEGIIENTYRLSCNHVFHEFCIRGWCIVGKKQTCPYCK. Residues 306–326 traverse the membrane as a helical segment; it reads LVAWQPVIIGVVQGINYILGL.

The protein belongs to the RNF121 family.

Its subcellular location is the endoplasmic reticulum membrane. It carries out the reaction S-ubiquitinyl-[E2 ubiquitin-conjugating enzyme]-L-cysteine + [acceptor protein]-L-lysine = [E2 ubiquitin-conjugating enzyme]-L-cysteine + N(6)-ubiquitinyl-[acceptor protein]-L-lysine.. It participates in protein modification; protein ubiquitination. In terms of biological role, E3 ubiquitin ligase which accepts ubiquitin and transfers it to substrates thereby promoting their degradation by the endoplasmic reticulum-associated degradation (ERAD) pathway which is a pathway involved in ubiquitin-dependent degradation of misfolded endoplasmic reticulum proteins. May regulate the unfolded protein response to reduce endoplasmic reticulum stress. The polypeptide is E3 ubiquitin ligase RNF121 (RNF121) (Homo sapiens (Human)).